Here is a 539-residue protein sequence, read N- to C-terminus: Alpha-aminoadipic semialdehyde dehydrogenase (539 aa).

The transit peptide at methionine 1–alanine 26 directs the protein to the mitochondrion. An N6-acetyllysine; alternate modification is found at lysine 94. Lysine 94 carries the N6-succinyllysine; alternate modification. Residues threonine 192–phenylalanine 194, lysine 218, glycine 258–threonine 259, glycine 274–serine 275, glycine 274–glycine 279, and glutamate 296–leucine 297 each bind NAD(+). The active-site Proton acceptor is glutamate 296. The Nucleophile role is filled by cysteine 330. Threonine 331 serves as a coordination point for (S)-2-amino-6-oxohexanoate. Residue glutamate 427 coordinates NAD(+). Lysine 462 is modified (N6-acetyllysine). Positions 489 and 490 each coordinate (S)-2-amino-6-oxohexanoate. An N6-acetyllysine modification is found at lysine 500. An N6-succinyllysine modification is found at lysine 537.

Belongs to the aldehyde dehydrogenase family. Homotetramer.

It localises to the cytoplasm. The protein resides in the cytosol. The protein localises to the nucleus. Its subcellular location is the mitochondrion. The enzyme catalyses nonanal + NAD(+) + H2O = nonanoate + NADH + 2 H(+). The catalysed reaction is (S)-2-amino-6-oxohexanoate + NAD(+) + H2O = L-2-aminoadipate + NADH + 2 H(+). It catalyses the reaction betaine aldehyde + NAD(+) + H2O = glycine betaine + NADH + 2 H(+). It carries out the reaction an aldehyde + NAD(+) + H2O = a carboxylate + NADH + 2 H(+). The enzyme catalyses hexanal + NAD(+) + H2O = hexanoate + NADH + 2 H(+). The catalysed reaction is octanal + NAD(+) + H2O = octanoate + NADH + 2 H(+). It catalyses the reaction (E)-non-2-enal + NAD(+) + H2O = (E)-non-2-enoate + NADH + 2 H(+). It carries out the reaction (E)-4-hydroxynon-2-enal + NAD(+) + H2O = (E)-4-hydroxynon-2-enoate + NADH + 2 H(+). It functions in the pathway amine and polyamine biosynthesis; betaine biosynthesis via choline pathway; betaine from betaine aldehyde: step 1/1. Multifunctional enzyme mediating important protective effects. Metabolizes betaine aldehyde to betaine, an important cellular osmolyte and methyl donor. Protects cells from oxidative stress by metabolizing a number of lipid peroxidation-derived aldehydes. Involved in lysine catabolism. The chain is Alpha-aminoadipic semialdehyde dehydrogenase (ALDH7A1) from Bos taurus (Bovine).